The primary structure comprises 229 residues: Rhamnosyl O-methyltransferase (229 aa).

The first 23 residues, 1-23, serve as a signal peptide directing secretion; that stretch reads MERVRQMFSCVSGMIYRPTDSIA.

This sequence belongs to the rhamnosyl O-methyltransferase family.

In terms of biological role, catalyzes the O-methylation of the hydroxyl group located on C-2 of the first rhamnosyl residue linked to the phenolic group of glycosylated phenolphthiocerol dimycocerosates (PGL) and p-hydroxybenzoic acid derivatives (p-HBAD). The protein is Rhamnosyl O-methyltransferase of Mycobacterium leprae (strain TN).